A 65-amino-acid chain; its full sequence is Metallothionein-like protein type 3 (65 aa).

This sequence belongs to the metallothionein superfamily. Type 15 family.

In terms of biological role, metallothioneins have a high content of cysteine residues that bind various heavy metals. The protein is Metallothionein-like protein type 3 of Musa acuminata (Banana).